A 370-amino-acid chain; its full sequence is Serine O-succinyltransferase (370 aa).

In terms of domain architecture, AB hydrolase-1 spans A46–D355. Positions G52–P55 are important for substrate specificity. S149 acts as the Nucleophile in catalysis. R218 contributes to the substrate binding site. Active-site residues include D316 and H349. A substrate-binding site is contributed by D350.

It belongs to the AB hydrolase superfamily. MetX family. Homodimer.

It localises to the cytoplasm. It catalyses the reaction succinyl-CoA + L-serine = O-succinyl-L-serine + CoA. It carries out the reaction L-homoserine + succinyl-CoA = O-succinyl-L-homoserine + CoA. It participates in amino-acid biosynthesis; L-cysteine biosynthesis; L-cysteine from L-serine: step 1/2. Functionally, transfers a succinyl group from succinyl-CoA to L-serine, forming succinyl-L-serine. In vitro, also has homoserine succinyl transferase activity. In Stenotrophomonas maltophilia (Pseudomonas maltophilia), this protein is Serine O-succinyltransferase.